We begin with the raw amino-acid sequence, 501 residues long: Ammonium transporter 1 member 1 (501 aa).

10 consecutive transmembrane segments (helical) span residues 8 to 28 (LAVL…GQLG), 46 to 66 (LLFS…LCAG), 81 to 101 (VLDA…FAFG), 128 to 148 (FLYQ…SIAE), 152 to 172 (FVAY…VVSH), 199 to 219 (FAGS…GALI), 243 to 263 (LVVL…PGSF), 333 to 353 (VVEP…LLGC), 366 to 386 (LEAA…TALF), and 419 to 439 (LIQI…LFFI). Threonine 460 carries the post-translational modification Phosphothreonine. A phosphoserine mark is found at serine 475, serine 488, serine 490, and serine 492.

This sequence belongs to the ammonia transporter channel (TC 1.A.11.2) family. As to quaternary structure, self interacts. Interacts with the receptor protein kinases CEPR2, At2g28990 and PAM74. In terms of tissue distribution, highly expressed in roots. Expressed in root tips, root hairs, root epidermis, rhizodermis, cortex and pericycle. Expressed in leaves epidermal and mesophyll cells.

The protein resides in the cell membrane. Functionally, high affinity ammonium transporter probably involved in ammonium uptake from the soil, long-distance transport to the shoots and re-uptake of apoplastic ammonium that derives from photorespiration in shoots. Contributes with AMT1-3 to the overall ammonium uptake capacity in roots under nitrogen-deficiency conditions. The sequence is that of Ammonium transporter 1 member 1 (AMT1-1) from Arabidopsis thaliana (Mouse-ear cress).